Reading from the N-terminus, the 504-residue chain is MLGKDYMLAIILVNCDDDLWGDQNLEGETGLPPGWRKIRDAAGTYYWHVPSGSTQWQRPTWELAEDPGTGKEGIWELRPPKGRSFSSLDSSLNRSNSLTWYNEDSYVRSLEPGAKCFAVRSLGWVEVPEEDLAPGKSSIAVNNCIQQLAQARNRSQPHDGAWGEGQNMLMVLKKDAMSLLNPLDHSLIHCQPLVHIRVWGVGSSKGRDRDFAFVAGDKDSCMLKCHVFRCDVPAKAIASRLQGLCAQILSERVGLSGEAACCSPDPISPEDFPRQVELLDAVSQAAQKYEALYMGILPVTKAMGMDVLNEAIGTLTGRGDRKTWVPAMLSVSDSLMTAHPIQAEAGAEEEPLWQCPVRLVTFIGVGHDPHTFGLIADLGCQSFQCAAFWCQPHAGGLSEAVQAACMVQYQKCLVASAARGKAWGAQARARLRLKRTSSMDSPGGPLPPPLLKGGVGGAGAAPRKRGVFSFLDAFRLKPLFSICPKLILEGWGKRLYTLPVPRVL.

Residues 29–61 (TGLPPGWRKIRDAAGTYYWHVPSGSTQWQRPTW) enclose the WW domain. 2 consecutive PID domains span residues 111–278 (EPGA…QVEL) and 283–438 (SQAA…RTSS).

Interacts with APP (via intracellular domain). Interacts with APLP1 and APLP2 (via intracellular domain). Expressed predominantly in brain and testis.

Its subcellular location is the cytoplasm. The protein localises to the nucleus. Functionally, may modulate the internalization of amyloid-beta precursor protein. The sequence is that of Amyloid-beta A4 precursor protein-binding family B member 3 from Rattus norvegicus (Rat).